The sequence spans 597 residues: Gamma-terpinene synthase, chloroplastic (597 aa).

Residues 1–47 (MATLSMQVSILSKQVKNLNSFGMRASKLPMVARRVDVSTTRLRPICS) constitute a chloroplast transit peptide. Mn(2+)-binding residues include aspartate 350 and aspartate 354. The DDXXD motif motif lies at 350–354 (DDVYD). 2 homodimerization regions span residues 356-362 (YGTLDEL) and 428-464 (EAKW…YFTL). 2 residues coordinate Mn(2+): aspartate 494 and glutamate 502.

This sequence belongs to the terpene synthase family. Homodimer. Requires Mn(2+) as cofactor. Mg(2+) serves as cofactor.

It is found in the plastid. The protein resides in the chloroplast. It catalyses the reaction (2E)-geranyl diphosphate = gamma-terpinene + diphosphate. Its pathway is secondary metabolite biosynthesis; terpenoid biosynthesis. Its function is as follows. Involved in the biosynthesis of phenolic monoterpenes natural products thymol and carvacrol which have a broad range of biological activities acting as antimicrobial compounds, insecticides, antioxidants and pharmaceutical agents. Monoterpene synthase which catalyzes the conversion of geranyl diphosphate (GPP) to gamma-terpinene. This is Gamma-terpinene synthase, chloroplastic from Thymus caespititius (Cretan thyme).